The chain runs to 173 residues: Peptide deformylase (173 aa).

2 residues coordinate Fe cation: Cys98 and His140. The active site involves Glu141. A Fe cation-binding site is contributed by His144.

Belongs to the polypeptide deformylase family. It depends on Fe(2+) as a cofactor.

It catalyses the reaction N-terminal N-formyl-L-methionyl-[peptide] + H2O = N-terminal L-methionyl-[peptide] + formate. Its function is as follows. Removes the formyl group from the N-terminal Met of newly synthesized proteins. Requires at least a dipeptide for an efficient rate of reaction. N-terminal L-methionine is a prerequisite for activity but the enzyme has broad specificity at other positions. This is Peptide deformylase from Caulobacter sp. (strain K31).